A 699-amino-acid chain; its full sequence is Probable xyloglucan glycosyltransferase 12 (699 aa).

The next 2 helical transmembrane spans lie at 126-146 (CLKVFLWLSLILLGFEIAAYF) and 194-214 (IVLFLVQSLDRLILCLGCFWI). The active site involves Asp-280. 2 residues coordinate substrate: Asp-339 and Asp-341. Residue Asp-433 is part of the active site. Transmembrane regions (helical) follow at residues 511 to 531 (LILPFYSFTLFCIILPMTMFV) and 536 to 556 (LPAWVVCYIPATMSFLNILPA). Residues 616 to 646 (EKTTKHQRGVSAPETEAEKKAEKTKRKKKKH) form a disordered region. Residues Lys-617 and Lys-620 each participate in a glycyl lysine isopeptide (Lys-Gly) (interchain with G-Cter in ubiquitin) cross-link. Ser-626 is subject to Phosphoserine. Over residues 637–646 (EKTKRKKKKH) the composition is skewed to basic residues. The next 2 helical transmembrane spans lie at 649 to 668 (IYMKELSLAFLLLTAATRSL) and 674 to 694 (IHFYFLLFQGISFLLVGLDLI).

Belongs to the glycosyltransferase 2 family. Plant cellulose synthase-like C subfamily. Homodimer. Mainly expressed in roots, flowers and seeds, and, at very low levels, in seedlings, leaves and stems.

It is found in the golgi apparatus membrane. Probable beta-1,4-glucan synthase rather involved in the synthesis of the xyloglucan backbone than cellulose. Seems to work simultaneously with xyloglucan 6-xylosyltransferase. Xyloglucan is a noncellulosic polysaccharides of plant cell wall and consists of a glucan backbone substituted by xylose, galactose and fucose. In Arabidopsis thaliana (Mouse-ear cress), this protein is Probable xyloglucan glycosyltransferase 12.